Reading from the N-terminus, the 489-residue chain is MPHAVALMVQGTTSDAGKSTLVAGLARVLFRRGVRIAPFKPQNMALNSAVTVDGGEIGRAQALQALAAGLEPHSDFNPVLLKPSTDVGAQVVIHGRVALSLSARDYHAYKPTAMAAVMASWDRLVTAYECVLVEGAGSPAEINLRDRDIANMGFAEAADVPVILVADIDRGGVFAHLVGTLELLSPSEQARVKGFVINRFRGDLGLLQPGLDWLEARTGRPVLGVLPYLHGLFLDAEDALADARAEKGETRLTVVAPVYPRISNHTDLDALRLHPQVDFRWVGPGQAMPPADLIVLPGSKSVQADLAWLRAQGWDAAILRHLRYGGKLAGICGGFQMLGGWLHDPLGLEGGAGSIAGLGLLDMETTLAAEKRLENVCGTLNLPRSPAAAGYEIHMGVSRGAALDRPALQFADGRGDGALSADGQILGTYLHGLFDTPAALSALLAWAGAGEVESVDLAARREADLDRLADAIERHLDLGRLFPAEWVRG.

The GATase cobBQ-type domain maps to 251-439 (RLTVVAPVYP…LHGLFDTPAA (189 aa)). Cysteine 332 (nucleophile) is an active-site residue. The active site involves histidine 431.

This sequence belongs to the CobB/CobQ family. CobQ subfamily.

It functions in the pathway cofactor biosynthesis; adenosylcobalamin biosynthesis. Functionally, catalyzes amidations at positions B, D, E, and G on adenosylcobyrinic A,C-diamide. NH(2) groups are provided by glutamine, and one molecule of ATP is hydrogenolyzed for each amidation. The polypeptide is Cobyric acid synthase (Aromatoleum aromaticum (strain DSM 19018 / LMG 30748 / EbN1) (Azoarcus sp. (strain EbN1))).